The primary structure comprises 1647 residues: MAP kinase-activating death domain protein (1647 aa).

Residues 14–268 (YLVIVGARHP…VPVSGQKRVD (255 aa)) enclose the uDENN domain. Residues 108–122 (EKGEGGAGSRGKEGT) are compositionally biased toward basic and acidic residues. The segment at 108 to 168 (EKGEGGAGSR…GKRRAKAGSR (61 aa)) is disordered. The span at 128-141 (SEEGGTESSESGSS) shows a compositional bias: low complexity. Polar residues predominate over residues 142-157 (LQPLSADSTPDVNQSP). Position 156 is a phosphoserine (Ser156). Residues 158–167 (RGKRRAKAGS) are compositionally biased toward basic residues. Residues 289 to 429 (RFTLVDFPLH…ESLELKKHLK (141 aa)) form the cDENN domain. In terms of domain architecture, dDENN spans 431-565 (ALASMSLNTQ…LNPTNYAFQR (135 aa)). Disordered regions lie at residues 604–636 (ALSV…SSYS) and 678–842 (NQKE…STEG). Positions 615–630 (SEPTDDSGSDSMDYDD) are enriched in acidic residues. Phosphoserine occurs at positions 689 and 692. Positions 689 to 699 (SENSQENPPLR) are enriched in polar residues. Positions 700 to 712 (SSSSTTASSSPST) are enriched in low complexity. Residues 750 to 768 (NVDRRQAEIGEGSVRRRIY) show a composition bias toward basic and acidic residues. Residues 790-804 (ESYTPRFSQHVSGNR) show a composition bias toward polar residues. Ser813, Ser818, and Ser820 each carry phosphoserine. The span at 827–840 (RASSPNSTVSNTST) shows a compositional bias: low complexity. 5 positions are modified to phosphoserine: Ser858, Ser862, Ser916, Ser921, and Ser930. 3 disordered regions span residues 913–941 (QKSS…SSEN), 1051–1110 (KEPD…DTRS), and 1146–1243 (VFDL…DSEI). Over residues 932–941 (QGRSSNSSEN) the composition is skewed to polar residues. Ser1059 carries the phosphoserine modification. Thr1061 and Thr1066 each carry phosphothreonine. Position 1110 is a phosphoserine (Ser1110). Composition is skewed to polar residues over residues 1158-1173 (QISA…SSQR), 1189-1207 (RSSS…SSGE), and 1234-1243 (SRGTLSDSEI). Thr1237 bears the Phosphothreonine mark. Residues Ser1239 and Ser1270 each carry the phosphoserine modification. Residues 1340–1415 (GMDQGPQEMI…GLVYSQQINE (76 aa)) enclose the Death domain.

It belongs to the MADD family. As to quaternary structure, interacts (via death domain) with TNFRSF1A (via death domain). Interacts with PIDD1. Interacts with YWHAZ. Interacts (via death domain) with KIF1B; links the motor KIF1B to Rab3-carrying vesicles in anterograde synaptic vesicle transport. Interacts with KIF1A. Interacts (via uDENN domain) with RAB3A, RAB3B, RAB3C and RAB3D; the GTP-bound form of the Rab proteins is preferred for interaction. Expressed in testis, ovary, brain and heart. Expressed in spleen, thymus, prostate, testis, ovary, small instestine and colon. Expressed in liver. As to expression, not detected in the brain, breast, kidney, lung, ovary, pancreas, testis, uterus, stomach and thyroid. In terms of tissue distribution, expressed in the brain, breast, kidney, lung, ovary, pancreas, testis, uterus, stomach and thyroid.

It localises to the cell membrane. It is found in the cytoplasm. The protein resides in the cell projection. Its subcellular location is the axon. Its function is as follows. Guanyl-nucleotide exchange factor that regulates small GTPases of the Rab family. Converts GDP-bound inactive form of RAB27A and RAB27B to the GTP-bound active forms. Converts GDP-bound inactive form of RAB3A, RAB3C and RAB3D to the GTP-bound active forms, GTPases involved in synaptic vesicle exocytosis and vesicle secretion. Plays a role in synaptic vesicle formation and in vesicle trafficking at the neuromuscular junction. Involved in up-regulating a post-docking step of synaptic exocytosis in central synapses. Probably by binding to the motor proteins KIF1B and KIF1A, mediates motor-dependent transport of GTP-RAB3A-positive vesicles to the presynaptic nerve terminals. Plays a role in TNFA-mediated activation of the MAPK pathway, including ERK1/2. May link TNFRSF1A with MAP kinase activation. May be involved in the regulation of TNFA-induced apoptosis. The chain is MAP kinase-activating death domain protein from Homo sapiens (Human).